Reading from the N-terminus, the 270-residue chain is NADPH-dependent 7-cyano-7-deazaguanine reductase (270 aa).

79-81 is a binding site for substrate; that stretch reads IES. 81–82 lines the NADPH pocket; it reads SK. Catalysis depends on C177, which acts as the Thioimide intermediate. The active-site Proton donor is D184. 216–217 contributes to the substrate binding site; it reads HE. Position 245–246 (245–246) interacts with NADPH; sequence RG.

The protein belongs to the GTP cyclohydrolase I family. QueF type 2 subfamily. Homodimer.

It is found in the cytoplasm. It catalyses the reaction 7-aminomethyl-7-carbaguanine + 2 NADP(+) = 7-cyano-7-deazaguanine + 2 NADPH + 3 H(+). It participates in tRNA modification; tRNA-queuosine biosynthesis. In terms of biological role, catalyzes the NADPH-dependent reduction of 7-cyano-7-deazaguanine (preQ0) to 7-aminomethyl-7-deazaguanine (preQ1). The sequence is that of NADPH-dependent 7-cyano-7-deazaguanine reductase from Acinetobacter baumannii (strain AB307-0294).